We begin with the raw amino-acid sequence, 537 residues long: Cytochrome P450 27C1 (537 aa).

Heme is bound at residue Cys483.

This sequence belongs to the cytochrome P450 family. Heme is required as a cofactor. In terms of tissue distribution, expressed in the dorsal third of retinal pigment epithelium, but not in the ventral counterpart (at protein level).

It localises to the membrane. The catalysed reaction is all-trans-retinol + 2 reduced [adrenodoxin] + O2 + 2 H(+) = all-trans-3,4-didehydroretinol + 2 oxidized [adrenodoxin] + 2 H2O. Functionally, efficiently catalyzes the conversion of all-trans retinol (also called vitamin A1, the precursor of 11-cis retinal) to 3,4-didehydroretinol (also called vitamin A2, the precursor of 11-cis 3,4-didehydroretinal), also acts on all-trans retinal and all-trans retinoic acid. The replacement of 11-cis retinal chromophore in photopigments with 11-cis 3,4-didehydroretinal enhances sensitivity to long-wavelength light. This may improve vision in fresh water which is often turbid. The polypeptide is Cytochrome P450 27C1 (cyp27c1) (Aquarana catesbeiana (American bullfrog)).